The chain runs to 435 residues: Manganese transport system membrane protein MntC (435 aa).

9 helical membrane passes run 17–37 (VLAG…FVLL), 42–62 (LIGD…FLFT), 68–88 (PFFL…IQLI), 98–118 (SAIG…LTYI), 143–163 (QDII…IVFF), 166–186 (FTLI…VRFL), 189–209 (LLAC…GVIL), 228–248 (LTGM…AGTL), and 255–275 (GMAT…FSMI).

It belongs to the ABC-3 integral membrane protein family. As to quaternary structure, the complex is probably composed of two ATP-binding proteins (MntB), two transmembrane proteins (MntC and MntD) and a solute-binding protein (MntA).

The protein localises to the cell membrane. Its function is as follows. Probably part of the ABC transporter complex MntABCD involved in manganese import. Probably responsible for the translocation of the substrate across the membrane. This is Manganese transport system membrane protein MntC from Bacillus subtilis (strain 168).